The sequence spans 147 residues: Small ribosomal subunit protein uS12 (147 aa).

The interval 1–22 (MPTINQLVRKPRKSKIEKSDSP) is disordered. 3-methylthioaspartic acid is present on aspartate 102.

This sequence belongs to the universal ribosomal protein uS12 family. As to quaternary structure, part of the 30S ribosomal subunit. Contacts proteins S8 and S17. May interact with IF1 in the 30S initiation complex.

Functionally, with S4 and S5 plays an important role in translational accuracy. In terms of biological role, interacts with and stabilizes bases of the 16S rRNA that are involved in tRNA selection in the A site and with the mRNA backbone. Located at the interface of the 30S and 50S subunits, it traverses the body of the 30S subunit contacting proteins on the other side and probably holding the rRNA structure together. The combined cluster of proteins S8, S12 and S17 appears to hold together the shoulder and platform of the 30S subunit. The sequence is that of Small ribosomal subunit protein uS12 from Streptococcus pyogenes serotype M12 (strain MGAS2096).